The primary structure comprises 462 residues: Glycine--tRNA ligase (462 aa).

Residues R100 and E174 each coordinate substrate. Residues 206–208, 216–221, 290–291, and 334–337 contribute to the ATP site; these read RNE, FRTREF, EL, and GVDR. Residue 221-225 participates in substrate binding; sequence FEQME. 330 to 334 is a binding site for substrate; it reads EPSVG.

The protein belongs to the class-II aminoacyl-tRNA synthetase family. In terms of assembly, homodimer.

The protein localises to the cytoplasm. It catalyses the reaction tRNA(Gly) + glycine + ATP = glycyl-tRNA(Gly) + AMP + diphosphate. Catalyzes the attachment of glycine to tRNA(Gly). The sequence is that of Glycine--tRNA ligase from Alkaliphilus oremlandii (strain OhILAs) (Clostridium oremlandii (strain OhILAs)).